The sequence spans 589 residues: Coronatine-insensitive protein homolog 2 (589 aa).

The region spanning 18-59 (IPDVALGLVMGFVEDPWDRDAISLVCRHWCRVDALSRKHVTV) is the F-box domain. Arg-87, Arg-352, Arg-414, and Arg-501 together coordinate jasmonate.

As to quaternary structure, interacts with TIFY9/JAZ5, TIFY11C/JAZ11 and TIFY11D/JAZ12 in a coronatine-dependent manner.

Involved in jasmonate (JA) signaling. Required for jasmonate signaling in plant defense responses. Component of SCF(COI1) E3 ubiquitin ligase complexes, which may mediate the ubiquitination and subsequent proteasomal degradation of target proteins, including TIFY/JAZ family. This is Coronatine-insensitive protein homolog 2 from Oryza sativa subsp. indica (Rice).